Reading from the N-terminus, the 385-residue chain is AA13 family lytic polysaccharide monooxygenase aasA (385 aa).

A signal peptide spans 1 to 18 (MKSLLALVAGNLVTAVSG). His-19 contacts Cu(2+). Residue His-19 is modified to Methylhistidine. Residues 19 to 248 (HGYLTVPASR…AQVYLHCADI (230 aa)) are N-terminal catalytic module. Cystine bridges form between Cys-40-Cys-43, Cys-66-Cys-245, Cys-102-Cys-203, Cys-118-Cys-145, Cys-153-Cys-161, Cys-167-Cys-173, and Cys-181-Cys-192. His-109 is a Cu(2+) binding site. Residue Asn-120 is glycosylated (N-linked (GlcNAc...) asparagine). Tyr-242 contacts Cu(2+). The disordered stretch occupies residues 254–276 (SGSSPSPTSTTSTATSTTTPSST). Low complexity predominate over residues 256–276 (SSPSPTSTTSTATSTTTPSST). One can recognise a CBM20 domain in the interval 278 to 385 (CASAISIPVT…TTATESGAWR (108 aa)). N-linked (GlcNAc...) asparagine glycosylation occurs at Asn-364.

This sequence belongs to the polysaccharide monooxygenase AA13 family. Cu(2+) serves as cofactor. The catalytically essential N-terminal histidine His-19 is post-translationally modified by methylation to prevent protonation of the histidine side chain, and protect the critical active site of the enzyme from oxidative damage.

The protein resides in the secreted. It catalyses the reaction starch + reduced acceptor + O2 = D-glucono-1,5-lactone-terminated malto-oligosaccharides + short-chain malto-oligosaccharides + acceptor + H2O.. Its function is as follows. Starch-active polysaccharide monooxygenase that oxidizes the C1 position of starch substrates, but not in cellulose, chitin, polygalacturonan or esterified pectin, nor with Arabidopsis stem cell walls. Catalysis by LPMOs requires the reduction of the active-site copper from Cu(II) to Cu(I) by a reducing agent and H(2)O(2) or O(2) as a cosubstrate. The chain is AA13 family lytic polysaccharide monooxygenase aasA from Emericella nidulans (strain FGSC A4 / ATCC 38163 / CBS 112.46 / NRRL 194 / M139) (Aspergillus nidulans).